Consider the following 551-residue polypeptide: Arylsulfatase (551 aa).

An N-terminal signal peptide occupies residues 1-20; the sequence is MKSAPFLFLLGLLGLVTAQT. Gln-21 bears the Blocked amino end (Gln) mark. Ca(2+) contacts are provided by Asp-60, His-61, and Cys-100. The active-site Nucleophile is Cys-100. Cys-100 is subject to 3-oxoalanine (Cys). His-158 is a catalytic residue. N-linked (GlcNAc...) asparagine glycosylation is found at Asn-164, Asn-213, and Asn-296. Residues Asp-308 and His-309 each contribute to the Ca(2+) site.

This sequence belongs to the sulfatase family. The cofactor is Ca(2+). In terms of processing, the conversion to 3-oxoalanine (also known as C-formylglycine, FGly), of a serine or cysteine residue in prokaryotes and of a cysteine residue in eukaryotes, is critical for catalytic activity.

The protein localises to the cytoplasm. The protein resides in the secreted. It localises to the extracellular space. It is found in the extracellular matrix. The catalysed reaction is an aryl sulfate + H2O = a phenol + sulfate + H(+). May be a structural component of the extracellular matrices involved in cell movement during morphogenesis. The sequence is that of Arylsulfatase from Hemicentrotus pulcherrimus (Sea urchin).